The sequence spans 101 residues: Urease subunit beta (101 aa).

This sequence belongs to the urease beta subunit family. In terms of assembly, heterotrimer of UreA (gamma), UreB (beta) and UreC (alpha) subunits. Three heterotrimers associate to form the active enzyme.

The protein resides in the cytoplasm. The catalysed reaction is urea + 2 H2O + H(+) = hydrogencarbonate + 2 NH4(+). It functions in the pathway nitrogen metabolism; urea degradation; CO(2) and NH(3) from urea (urease route): step 1/1. The sequence is that of Urease subunit beta from Haemophilus influenzae (strain 86-028NP).